The primary structure comprises 164 residues: Lipoprotein signal peptidase (164 aa).

The next 4 membrane-spanning stretches (helical) occupy residues tryptophan 12–glutamine 32, leucine 42–alanine 62, tryptophan 70–serine 90, and alanine 102–valine 122. Catalysis depends on residues aspartate 123 and aspartate 141. Residues phenylalanine 137 to leucine 157 form a helical membrane-spanning segment.

The protein belongs to the peptidase A8 family.

The protein resides in the cell inner membrane. The enzyme catalyses Release of signal peptides from bacterial membrane prolipoproteins. Hydrolyzes -Xaa-Yaa-Zaa-|-(S,diacylglyceryl)Cys-, in which Xaa is hydrophobic (preferably Leu), and Yaa (Ala or Ser) and Zaa (Gly or Ala) have small, neutral side chains.. It functions in the pathway protein modification; lipoprotein biosynthesis (signal peptide cleavage). Its function is as follows. This protein specifically catalyzes the removal of signal peptides from prolipoproteins. In Shigella flexneri serotype 5b (strain 8401), this protein is Lipoprotein signal peptidase.